A 350-amino-acid polypeptide reads, in one-letter code: tRNA N6-adenosine threonylcarbamoyltransferase (350 aa).

Fe cation-binding residues include H109 and H113. Substrate contacts are provided by residues 136–140 (TVSGG), D169, G182, D186, and N284. D312 provides a ligand contact to Fe cation.

The protein belongs to the KAE1 / TsaD family. Fe(2+) is required as a cofactor.

Its subcellular location is the cytoplasm. It carries out the reaction L-threonylcarbamoyladenylate + adenosine(37) in tRNA = N(6)-L-threonylcarbamoyladenosine(37) in tRNA + AMP + H(+). Required for the formation of a threonylcarbamoyl group on adenosine at position 37 (t(6)A37) in tRNAs that read codons beginning with adenine. Is involved in the transfer of the threonylcarbamoyl moiety of threonylcarbamoyl-AMP (TC-AMP) to the N6 group of A37, together with TsaE and TsaB. TsaD likely plays a direct catalytic role in this reaction. The sequence is that of tRNA N6-adenosine threonylcarbamoyltransferase from Chlorobium chlorochromatii (strain CaD3).